The primary structure comprises 334 residues: Glyceraldehyde-3-phosphate dehydrogenase (334 aa).

NAD(+) is bound by residues 12-13 (TI) and glycine 111. 140–142 (SCN) is a binding site for D-glyceraldehyde 3-phosphate. The active-site Nucleophile is cysteine 141. Arginine 167 is an NAD(+) binding site. 192 to 193 (HG) provides a ligand contact to D-glyceraldehyde 3-phosphate. Glutamine 298 contacts NAD(+).

Belongs to the glyceraldehyde-3-phosphate dehydrogenase family. In terms of assembly, homotetramer.

It is found in the cytoplasm. The catalysed reaction is D-glyceraldehyde 3-phosphate + phosphate + NADP(+) = (2R)-3-phospho-glyceroyl phosphate + NADPH + H(+). The enzyme catalyses D-glyceraldehyde 3-phosphate + phosphate + NAD(+) = (2R)-3-phospho-glyceroyl phosphate + NADH + H(+). It functions in the pathway carbohydrate degradation; glycolysis; pyruvate from D-glyceraldehyde 3-phosphate: step 1/5. The sequence is that of Glyceraldehyde-3-phosphate dehydrogenase from Thermococcus onnurineus (strain NA1).